The sequence spans 476 residues: Rho GTPase-activating protein 68F (476 aa).

Disordered regions lie at residues 1–35 (MDAHSRFAPRLPGPAINPIVDNSDEPQPSLSDLHD) and 241–266 (DKLNPSRKPSTPPPSSNINASRQQQH). A phosphoserine mark is found at serine 29 and serine 31. The CRAL-TRIO domain maps to 91-244 (SENFQTPRNK…NICDLDDKLN (154 aa)). Threonine 251 carries the post-translational modification Phosphothreonine. Residues 257-266 (NINASRQQQH) show a composition bias toward polar residues. In terms of domain architecture, Rho-GAP spans 276–464 (VPLKFIVMNS…FVLQNHKDIY (189 aa)).

In terms of biological role, functions as a GTPase-activating protein (GAP) for RhoA/Rho1 during gastrulation by converting it to an inactive GDP-bound state. This is Rho GTPase-activating protein 68F (RhoGAP68F) from Drosophila melanogaster (Fruit fly).